Consider the following 191-residue polypeptide: Protein GrpE (191 aa).

Over residues methionine 1–threonine 14 the composition is skewed to polar residues. The interval methionine 1–threonine 35 is disordered. A compositionally biased stretch (low complexity) spans glutamate 19–threonine 35.

The protein belongs to the GrpE family. Homodimer.

The protein resides in the cytoplasm. In terms of biological role, participates actively in the response to hyperosmotic and heat shock by preventing the aggregation of stress-denatured proteins, in association with DnaK and GrpE. It is the nucleotide exchange factor for DnaK and may function as a thermosensor. Unfolded proteins bind initially to DnaJ; upon interaction with the DnaJ-bound protein, DnaK hydrolyzes its bound ATP, resulting in the formation of a stable complex. GrpE releases ADP from DnaK; ATP binding to DnaK triggers the release of the substrate protein, thus completing the reaction cycle. Several rounds of ATP-dependent interactions between DnaJ, DnaK and GrpE are required for fully efficient folding. In Cupriavidus taiwanensis (strain DSM 17343 / BCRC 17206 / CCUG 44338 / CIP 107171 / LMG 19424 / R1) (Ralstonia taiwanensis (strain LMG 19424)), this protein is Protein GrpE.